The chain runs to 83 residues: Retinal cone rhodopsin-sensitive cGMP 3',5'-cyclic phosphodiesterase subunit gamma (83 aa).

The disordered stretch occupies residues 1 to 54; that stretch reads MSDSPSLSPPAPSQGPTTPRKGPPKFKQRQTRQFKSKPPKKGVKGFGDDIPGME. A compositionally biased stretch (basic residues) spans 22 to 43; it reads GPPKFKQRQTRQFKSKPPKKGV.

It belongs to the rod/cone cGMP-PDE gamma subunit family. Tetramer composed of two catalytic chains (alpha and beta), and two inhibitory chains (gamma).

It catalyses the reaction 3',5'-cyclic GMP + H2O = GMP + H(+). In terms of biological role, participates in processes of transmission and amplification of the visual signal. cGMP-PDEs are the effector molecules in G-protein-mediated phototransduction in vertebrate rods and cones. In Mus musculus (Mouse), this protein is Retinal cone rhodopsin-sensitive cGMP 3',5'-cyclic phosphodiesterase subunit gamma (Pde6h).